The primary structure comprises 117 residues: Ig heavy chain V region 1-62-3 (117 aa).

The first 19 residues, 1–19, serve as a signal peptide directing secretion; it reads MGWSCIMLFLAATATGVHF. The framework-1 stretch occupies residues 20–49; that stretch reads QVQLQQPGAELVKPGASVKLSSKASGYTFT. The interval 50-54 is complementarity-determining-1; it reads SYWMH. The framework-2 stretch occupies residues 55–68; the sequence is WVKQRPGRGLEWIG. Residues 69-85 form a complementarity-determining-2 region; the sequence is RIDPNSGGTKYNEKFKS. The tract at residues 86 to 117 is framework-3; that stretch reads KATLTVDKPSSTAYMQLSSLTSEDSAVYYCAR.

The protein is Ig heavy chain V region 1-62-3 (Ighv1-62-3) of Mus musculus (Mouse).